The chain runs to 161 residues: Lipoprotein LpqH (161 aa).

A signal peptide spans 1–21 (MNRQLRFAVAGPEILAAVVSG). Low complexity predominate over residues 21–46 (GCSSGNKSAPSSSASSSSTSPSASSG). Residues 21 to 49 (GCSSGNKSAPSSSASSSSTSPSASSGGAA) form a disordered region. Residue cysteine 22 is the site of N-palmitoyl cysteine attachment. Cysteine 22 carries S-diacylglycerol cysteine lipidation.

It belongs to the mycobacterial 19 kDa antigen family. In terms of processing, modified by Lgt on Cys-22 with an S-linked diacylglycerol with a mixture of C16, C18 and C19 fatty acids, signal peptide is removed by LspA, modifed by Lnt with an amide-linked mixture of C16 and C19 fatty acids.

Its subcellular location is the cell membrane. In terms of biological role, might be involved in ligand transport. A host TLR2 agonist, modifies host gene expression in response to pathogen. This Mycobacterium avium protein is Lipoprotein LpqH (lpqH).